A 487-amino-acid chain; its full sequence is UDP-N-acetylmuramate--L-alanine ligase (487 aa).

129-135 contacts ATP; that stretch reads GTHGKTT.

It belongs to the MurCDEF family.

It is found in the cytoplasm. The catalysed reaction is UDP-N-acetyl-alpha-D-muramate + L-alanine + ATP = UDP-N-acetyl-alpha-D-muramoyl-L-alanine + ADP + phosphate + H(+). It functions in the pathway cell wall biogenesis; peptidoglycan biosynthesis. In terms of biological role, cell wall formation. This chain is UDP-N-acetylmuramate--L-alanine ligase, found in Aliivibrio salmonicida (strain LFI1238) (Vibrio salmonicida (strain LFI1238)).